The chain runs to 407 residues: Phosphopentomutase (407 aa).

Residues D10, D306, H311, D347, H348, and H359 each coordinate Mn(2+).

It belongs to the phosphopentomutase family. It depends on Mn(2+) as a cofactor.

The protein localises to the cytoplasm. The catalysed reaction is 2-deoxy-alpha-D-ribose 1-phosphate = 2-deoxy-D-ribose 5-phosphate. It catalyses the reaction alpha-D-ribose 1-phosphate = D-ribose 5-phosphate. Its pathway is carbohydrate degradation; 2-deoxy-D-ribose 1-phosphate degradation; D-glyceraldehyde 3-phosphate and acetaldehyde from 2-deoxy-alpha-D-ribose 1-phosphate: step 1/2. Isomerase that catalyzes the conversion of deoxy-ribose 1-phosphate (dRib-1-P) and ribose 1-phosphate (Rib-1-P) to deoxy-ribose 5-phosphate (dRib-5-P) and ribose 5-phosphate (Rib-5-P), respectively. The polypeptide is Phosphopentomutase (Escherichia coli O127:H6 (strain E2348/69 / EPEC)).